The chain runs to 362 residues: Phosphoserine aminotransferase (362 aa).

Residues Ser9 and Arg42 each coordinate L-glutamate. Residues 76 to 77 (GR), Trp102, Thr153, Asp174, and Gln197 contribute to the pyridoxal 5'-phosphate site. The residue at position 198 (Lys198) is an N6-(pyridoxal phosphate)lysine. A pyridoxal 5'-phosphate-binding site is contributed by 239–240 (NT).

This sequence belongs to the class-V pyridoxal-phosphate-dependent aminotransferase family. SerC subfamily. Homodimer. Pyridoxal 5'-phosphate is required as a cofactor.

Its subcellular location is the cytoplasm. It carries out the reaction O-phospho-L-serine + 2-oxoglutarate = 3-phosphooxypyruvate + L-glutamate. The catalysed reaction is 4-(phosphooxy)-L-threonine + 2-oxoglutarate = (R)-3-hydroxy-2-oxo-4-phosphooxybutanoate + L-glutamate. Its pathway is amino-acid biosynthesis; L-serine biosynthesis; L-serine from 3-phospho-D-glycerate: step 2/3. The protein operates within cofactor biosynthesis; pyridoxine 5'-phosphate biosynthesis; pyridoxine 5'-phosphate from D-erythrose 4-phosphate: step 3/5. Functionally, catalyzes the reversible conversion of 3-phosphohydroxypyruvate to phosphoserine and of 3-hydroxy-2-oxo-4-phosphonooxybutanoate to phosphohydroxythreonine. The polypeptide is Phosphoserine aminotransferase (Escherichia coli O139:H28 (strain E24377A / ETEC)).